Consider the following 225-residue polypeptide: Endoglucanase (225 aa).

Positions 1-15 (MKVFVVLAAIVAIAN) are cleaved as a signal peptide. Aspartate 29 serves as the catalytic Nucleophile. 7 disulfides stabilise this stretch: cysteine 30–cysteine 152, cysteine 31–cysteine 66, cysteine 35–cysteine 103, cysteine 50–cysteine 74, cysteine 104–cysteine 219, cysteine 106–cysteine 209, and cysteine 176–cysteine 187. Asparagine 55 carries N-linked (GlcNAc...) asparagine glycosylation. Residue aspartate 138 is the Proton donor of the active site.

It belongs to the glycosyl hydrolase 45 (cellulase K) family. In terms of processing, N- and O-glycosylated. Contains hybrid- and complex-type N-glycans.

It is found in the secreted. It catalyses the reaction Endohydrolysis of (1-&gt;4)-beta-D-glucosidic linkages in cellulose, lichenin and cereal beta-D-glucans.. Activity is not affected by metal ions except Mn(2+), which reduces the activity by 40-50%. However, no significant change in activity in response to 1 mM EDTA. Functionally, hydrolyzes carboxymethylcellulose (CMC). Also hydrolyzes lichenan and barley beta-1,4-D-glucan. CMC is hydrolyzed majorily to cellobiose (G2), cellotriose (G3) and cellotetraose (G4). Cellohexaose (G6) is hydrolyzed to G4 and G2 with traces of G3. Cellopentaose (G5) is completely hydrolyzed to G2 and G3, and G4 is partially hydrolyzed to G2. Does not hydrolyze G2 or G3. Does not hydrolyze crystalline cellulose, soluble starch, xylan, mannan or laminarin. The protein is Endoglucanase of Cryptopygus antarcticus (Antarctic springtail).